The following is a 514-amino-acid chain: MEPTTSLRSCPIASLLFFLVLSLFVLVSAQFTVIGPAEPILAMVGENTTLHCHLSPERNAEEMEVRWFRWRFFPAVLVYRGHQERPEEQMVAYRGRTTFMRTDISKGRVALIIHNVTAYDNGIYCCYFQEGRSYDQATMKLMVASLGSEPLIKMKTLEDGSILLECTSEGWYPEPRAVWRDPYDEVVPALEEEYTADREGLFTVTMTIIIRDCSVRNMTCSVNNTLLSQEVESVILIPESFVPSLPLWMVAVAVTLPVVMLILLTSGSICLVKKHRRKKSILSAEKEAEYEEKEAARQLQEELRWRRTLLHAADVVLDPDTAHPELFLSDDQRSVIRGSSRQSVPDNPERFDCRPCVLGRESFSSGKHYWEVEVENVMVWAIGVCRDSVERKGEALLVPQNGFWTLEMFGSQYRALSSPEKIIPLKERLHRIAVFLDCEGGDISFYNMRDRSHIYTCPPVTFTGPLRPFFRLGSDDSPLFICPAFTGAQGVTIPEGGLFLYKTRPISQSLVRKP.

An N-terminal signal peptide occupies residues M1–A29. One can recognise an Ig-like V-type domain in the interval Q30–M142. Residues Q30–S244 lie on the Extracellular side of the membrane. Residues N47 and N115 are each glycosylated (N-linked (GlcNAc...) asparagine). 2 cysteine pairs are disulfide-bonded: C52–C126 and C166–C220. The Ig-like C2-type domain maps to P150–E232. A helical transmembrane segment spans residues L245 to T265. The Cytoplasmic segment spans residues S266–P514. The stretch at I281 to R304 forms a coiled coil. The B30.2/SPRY domain maps to A295–A488.

This sequence belongs to the immunoglobulin superfamily. BTN/MOG family. In terms of processing, N-glycosylated. In terms of tissue distribution, widely expressed (at protein level). In the thymus, restricted to the corticomedullary junction, but not confined solely to epithelial cells (at protein level). Significant expression on naive B-cells, splenic natural killer cells, dendritic cells and peritoneal macrophages (at protein level). Negligible expression on naive T-cells up-regulated on activated T-cells (at protein level).

The protein resides in the membrane. Its function is as follows. Inhibits the proliferation of CD4 and CD8 T-cells activated by anti-CD3 antibodies, T-cell metabolism and IL2 and IFNG secretion. This is Butyrophilin subfamily 2 member A2 (Btn2a2) from Mus musculus (Mouse).